The chain runs to 198 residues: Recombination protein RecR (198 aa).

The segment at 57 to 72 (CSICGNLTESDPCAIC) adopts a C4-type zinc-finger fold. Positions 80–175 (TTILVVEESK…KVTRLAHGLA (96 aa)) constitute a Toprim domain.

It belongs to the RecR family.

In terms of biological role, may play a role in DNA repair. It seems to be involved in an RecBC-independent recombinational process of DNA repair. It may act with RecF and RecO. The protein is Recombination protein RecR of Lactococcus lactis subsp. cremoris (strain SK11).